Consider the following 126-residue polypeptide: Aspartate 1-decarboxylase (126 aa).

Residue Ser-25 is the Schiff-base intermediate with substrate; via pyruvic acid of the active site. Ser-25 bears the Pyruvic acid (Ser) mark. Thr-57 contacts substrate. Residue Tyr-58 is the Proton donor of the active site. Gly-72 to Ala-74 contacts substrate.

Belongs to the PanD family. In terms of assembly, heterooctamer of four alpha and four beta subunits. The cofactor is pyruvate. In terms of processing, is synthesized initially as an inactive proenzyme, which is activated by self-cleavage at a specific serine bond to produce a beta-subunit with a hydroxyl group at its C-terminus and an alpha-subunit with a pyruvoyl group at its N-terminus.

The protein localises to the cytoplasm. The catalysed reaction is L-aspartate + H(+) = beta-alanine + CO2. The protein operates within cofactor biosynthesis; (R)-pantothenate biosynthesis; beta-alanine from L-aspartate: step 1/1. Its function is as follows. Catalyzes the pyruvoyl-dependent decarboxylation of aspartate to produce beta-alanine. The polypeptide is Aspartate 1-decarboxylase (Campylobacter jejuni subsp. jejuni serotype O:6 (strain 81116 / NCTC 11828)).